The sequence spans 366 residues: Lipase member J (366 aa).

Ser-141 (nucleophile) is an active-site residue. Residues Asp-312 and His-341 each act as charge relay system in the active site.

Belongs to the AB hydrolase superfamily. Lipase family.

This Homo sapiens (Human) protein is Lipase member J (LIPJ).